A 550-amino-acid polypeptide reads, in one-letter code: Transcription factor 7-like 1-C (550 aa).

Residues 1-11 (MPQLNSGGGDE) are compositionally biased toward gly residues. The interaction with CTNNB1-A stretch occupies residues 1 to 60 (MPQLNSGGGDELGANDELIRFKDEGEQEEKSPGEGSAEDLADVKSSLVNESENHSSDSDS). 3 disordered regions span residues 1-76 (MPQL…EKPR), 182-206 (GTPPGHLSPEIDPKTGIPRPPHPSE), and 390-473 (WSAR…SLTT). 2 stretches are compositionally biased toward basic and acidic residues: residues 17-32 (ELIRFKDEGEQEEKSP) and 51-76 (SENHSSDSDSEVERRPPPRETFEKPR). An interaction with AES and TLE4-A region spans residues 108 to 311 (LGGITCPMVP…SPNLSRKSNV (204 aa)). Positions 323 to 391 (IKKPLNAFML…LHSQLYPSWS (69 aa)) form a DNA-binding region, HMG box. Positions 406–415 (KQSPEMENYT) are enriched in basic and acidic residues. Residues 407–550 (QSPEMENYTK…PLSLVTRSSD (144 aa)) are interaction with CTBP-B. A compositionally biased stretch (low complexity) spans 444–463 (SPATPSAALASPAAPAATHS). Polar residues predominate over residues 464–473 (EQAQPLSLTT).

This sequence belongs to the TCF/LEF family. In terms of assembly, interacts with csnk1e, ctnnb1-A, ctbp-B, dact1-A and gsk3b. May interact with ase and tle4-A. In terms of processing, phosphorylated. Phosphorylation by csnk1e promotes binding to ctnnb1-A while phosphorylation by gsk3b may reverse this effect.

The protein localises to the nucleus. In terms of biological role, participates in the Wnt signaling pathway. Binds to DNA and acts as a repressor in the absence of ctnnb1-A and possibly ctnnb1-B, and as an activator in the presence of these proteins. Required early in development for the establishment of the dorsal body axis in response to maternal Wnt signaling. The sequence is that of Transcription factor 7-like 1-C (tcf7l1-c) from Xenopus laevis (African clawed frog).